A 350-amino-acid polypeptide reads, in one-letter code: Phenylalanine--tRNA ligase alpha subunit (350 aa).

Mg(2+) is bound at residue Glu262.

It belongs to the class-II aminoacyl-tRNA synthetase family. Phe-tRNA synthetase alpha subunit type 1 subfamily. In terms of assembly, tetramer of two alpha and two beta subunits. Requires Mg(2+) as cofactor.

It localises to the cytoplasm. The enzyme catalyses tRNA(Phe) + L-phenylalanine + ATP = L-phenylalanyl-tRNA(Phe) + AMP + diphosphate + H(+). The protein is Phenylalanine--tRNA ligase alpha subunit of Thermus thermophilus (strain ATCC BAA-163 / DSM 7039 / HB27).